Reading from the N-terminus, the 363-residue chain is MSPKNLTRSVVPAIDLYCRKANFKTLKFLSMILCSKKEWYDNTKAPVRNFLVSRCAVFEQLRNRLVDEGKVNLFGVFLTNDSFSFCKMTVDDKFDTSLVDWQKIPFDYSFATERRQHISLLPPDTLFATEKIISLLGVSPNMANLVSIERQRSDLMDFSCKLQSNILEHLLYAKCQGVQVTSTNEEARLLAAICNPEFIDAFWCELTPIRASLKENPSISVPQEYQIYDPVIRATIKEVVAKRLLRSAFDNDIDPLMRLRLDKGWKFKFPTLSSTTDLDFSLKDCLSLDTRRDAYDMTEVFLATMASSKTLRTYSNLVDIVMKDNGRFDSGILKQFNDYVKQEKLNLQNFQAGSSEFLKGVKI.

Its subcellular location is the mitochondrion. Functionally, function in mitochondrial RNA splicing in the excision of mitochondrial group I introns aI1 and aI5 beta from COX1 and bI3 from COB transcripts and thus would be involved in obtaining the correct structure of the intron, to allow the RNA catalyzed reactions to occur. The sequence is that of Mitochondrial RNA-splicing protein MRS1 (MRS1) from Saccharomyces paradoxus (Yeast).